We begin with the raw amino-acid sequence, 348 residues long: Zinc finger protein 843 (348 aa).

A C2H2-type 1 zinc finger spans residues 33–55 (CKCKACGRGFTQSASLLQHWRVH). The segment at 145-167 (FCCCSCGDSVNEKTSLSQRVLPH) adopts a C2H2-type 2; degenerate zinc-finger fold. Positions 184–195 (APSSVAPDSTSG) are enriched in polar residues. Disordered stretches follow at residues 184-203 (APSS…GSPG) and 256-329 (ATQP…WRGA).

The chain is Zinc finger protein 843 (ZNF843) from Homo sapiens (Human).